Here is a 658-residue protein sequence, read N- to C-terminus: Glycogen debranching enzyme (658 aa).

Catalysis depends on D336, which acts as the Nucleophile. The Proton donor role is filled by E371.

It belongs to the glycosyl hydrolase 13 family.

The catalysed reaction is Hydrolysis of (1-&gt;6)-alpha-D-glucosidic linkages to branches with degrees of polymerization of three or four glucose residues in limit dextrin.. Its pathway is glycan degradation; glycogen degradation. In terms of biological role, removes maltotriose and maltotetraose chains that are attached by 1,6-alpha-linkage to the limit dextrin main chain, generating a debranched limit dextrin. The chain is Glycogen debranching enzyme from Klebsiella pneumoniae subsp. pneumoniae (strain ATCC 700721 / MGH 78578).